We begin with the raw amino-acid sequence, 62 residues long: Probable tautomerase SH1546 (62 aa).

The Proton acceptor; via imino nitrogen role is filled by proline 2.

The protein belongs to the 4-oxalocrotonate tautomerase family.

In Staphylococcus haemolyticus (strain JCSC1435), this protein is Probable tautomerase SH1546.